The primary structure comprises 290 residues: Cilia- and flagella-associated protein 298 (290 aa).

Belongs to the CFAP298 family. As to quaternary structure, interacts with dnaaf1/swt. Interacts with lrrc6/sea. Interacts with dvl (via DEP and PDZ domains). Strongly expressed in ciliated tissues of the embryonic trunk, including the pronephric ducts and spinal canal.

The protein localises to the cytoplasm. It is found in the cytoskeleton. It localises to the cilium basal body. Plays a role in motile cilium function, possibly by acting on outer dynein arm assembly. Seems to be important for initiation rather than maintenance of cilium motility. Required for correct positioning of cilia at the apical cell surface, suggesting an additional role in the planar cell polarity (PCP) pathway. May suppress canonical Wnt signaling activity. The chain is Cilia- and flagella-associated protein 298 from Danio rerio (Zebrafish).